Reading from the N-terminus, the 154-residue chain is Aspartate carbamoyltransferase regulatory chain (154 aa).

Residues C109, C114, C138, and C141 each coordinate Zn(2+).

It belongs to the PyrI family. In terms of assembly, contains catalytic and regulatory chains. Requires Zn(2+) as cofactor.

Involved in allosteric regulation of aspartate carbamoyltransferase. The chain is Aspartate carbamoyltransferase regulatory chain from Serratia proteamaculans (strain 568).